The chain runs to 525 residues: Biotinidase (525 aa).

The first 26 residues, 1–26 (MSRAGRQLALLLCSCCVAVAIPGGLA), serve as a signal peptide directing secretion. The 280-residue stretch at 54-333 (DPLALTSREQ…PGLISAGNAT (280 aa)) folds into the CN hydrolase domain. The active-site Proton acceptor is glutamate 94. 2 N-linked (GlcNAc...) asparagine glycosylation sites follow: asparagine 132 and asparagine 185. The Proton donor role is filled by lysine 194. Catalysis depends on cysteine 227, which acts as the Nucleophile. Residue asparagine 384 is glycosylated (N-linked (GlcNAc...) asparagine).

It belongs to the carbon-nitrogen hydrolase superfamily. BTD/VNN family.

It is found in the secreted. The protein localises to the extracellular space. It catalyses the reaction biocytin + H2O = biotin + L-lysine. The catalysed reaction is biotin amide + H2O = biotin + NH4(+). Functionally, catalytic release of biotin from biocytin, the product of biotin-dependent carboxylases degradation. This chain is Biotinidase (BTD), found in Bos taurus (Bovine).